Here is a 325-residue protein sequence, read N- to C-terminus: Homeobox protein Hox-A1a (325 aa).

The short motif at 187–192 is the Antp-type hexapeptide element; sequence TFDWMK. Disordered regions lie at residues 194 to 215 and 264 to 325; these read KRNPPKTGRSGEYGYGGQPNTV and RMKQ…YPSN. A DNA-binding region (homeobox) is located at residues 212–271; sequence PNTVRTNFTTKQLTELEKEFHFNKYLTRARRVEIAAALQLNETQVKIWFQNRRMKQKKRE. Positions 285-300 are enriched in basic and acidic residues; the sequence is SGERNQEKVEDGESEK. Residues 301–317 are compositionally biased toward low complexity; sequence SVSAPSTPSPTSSTVSS.

This sequence belongs to the Antp homeobox family. Labial subfamily.

The protein localises to the nucleus. Its function is as follows. Sequence-specific transcription factor which is part of a developmental regulatory system that provides cells with specific positional identities on the anterior-posterior axis. The chain is Homeobox protein Hox-A1a (hoxa1a) from Takifugu rubripes (Japanese pufferfish).